Here is a 312-residue protein sequence, read N- to C-terminus: RNA-binding protein Raly (312 aa).

At serine 2 the chain carries N-acetylserine. A Glycyl lysine isopeptide (Lys-Gly) (interchain with G-Cter in SUMO2) cross-link involves residue lysine 4. The region spanning 21–92 (SRVFIGNLNT…QTLDINMAGE (72 aa)) is the RRM domain. Lysine 44 carries the post-translational modification N6-acetyllysine. Residues lysine 94 and lysine 99 each participate in a glycyl lysine isopeptide (Lys-Gly) (interchain with G-Cter in SUMO2) cross-link. Residue serine 135 is modified to Phosphoserine. A Glycyl lysine isopeptide (Lys-Gly) (interchain with G-Cter in SUMO2) cross-link involves residue lysine 159. Lysine 165 carries the post-translational modification N6-acetyllysine; alternate. Residue lysine 165 forms a Glycyl lysine isopeptide (Lys-Gly) (interchain with G-Cter in SUMO2); alternate linkage. Residues lysine 179 and lysine 191 each participate in a glycyl lysine isopeptide (Lys-Gly) (interchain with G-Cter in SUMO2) cross-link. Residues 184 to 216 (SSELQTIKTELTQIKSNIDALLGRLEQIAEEQK) adopt a coiled-coil conformation. Basic and acidic residues predominate over residues 214–226 (EQKANPDGKKKGD). The interval 214–312 (EQKANPDGKK…DTDAEDGALQ (99 aa)) is disordered. Gly residues predominate over residues 228–253 (SSGGGGGSSGGGGSSNVGGGSSGGSG). Threonine 268 carries the post-translational modification Phosphothreonine. Serine 270 bears the Phosphoserine mark. Residues threonine 274 and threonine 292 each carry the phosphothreonine modification. Over residues 293-303 (HSEEELEHSQD) the composition is skewed to basic and acidic residues. Phosphoserine occurs at positions 294 and 301. Phosphothreonine is present on threonine 304.

This sequence belongs to the RRM HNRPC family. RALY subfamily. As to quaternary structure, identified in the spliceosome C complex. Interacts (through its RNA-binding domain) with FUS (through its RNA-binding domain); both are components of the same RNPs. In terms of tissue distribution, widely expressed. Expressed in brain, testis, lung, spleen and kidney. Weakly expressed in liver.

The protein localises to the nucleus. In terms of biological role, RNA-binding protein that acts as a transcriptional cofactor for cholesterol biosynthetic genes in the liver. Binds the lipid-responsive non-coding RNA LeXis and is required for LeXis-mediated effect on cholesterogenesis. May be a heterogeneous nuclear ribonucleoprotein (hnRNP). The polypeptide is RNA-binding protein Raly (Raly) (Mus musculus (Mouse)).